A 375-amino-acid chain; its full sequence is Major DNA-binding protein (375 aa).

It belongs to the herpesviridae DNA-binding protein family.

It localises to the host nucleus. Single-stranded DNA-binding protein required for DNA replication. This Equine herpesvirus 1 (strain HVS25A) (EHV-1) protein is Major DNA-binding protein.